The following is a 412-amino-acid chain: Double C2-like domain-containing protein beta (412 aa).

The tract at residues 1–36 (MTLRRRGEKATISIQEHMAIDVCPGPIRPIKQISDY) is negatively regulates targeting to plasma membrane. The segment at 1 to 90 (MTLRRRGEKA…EDVDQLFGAY (90 aa)) is mediates interaction with DYNLT1. The disordered stretch occupies residues 38–123 (PRFPRGLPPT…PDADGYESDD (86 aa)). The span at 49-73 (APRASAPPDAPARSPAATAGPRSPS) shows a compositional bias: low complexity. A compositionally biased stretch (pro residues) spans 95–108 (GPSPGPSPVRPPAK). Residues 112-123 (DEPDADGYESDD) are compositionally biased toward acidic residues. 2 C2 domains span residues 126 to 250 (ALGT…SICL) and 266 to 399 (ERGR…ERWH). Asp-157, Asp-163, Asp-218, Asp-220, Asp-297, Asp-303, Asp-357, Asp-359, and Asp-365 together coordinate Ca(2+). Residues 257–375 (DKAEDKSLEE…FIGGVVLGIN (119 aa)) form a mediates interaction with STXBP3 region. Phosphoserine is present on Ser-411.

As to quaternary structure, interacts with STX4; the interaction is calcium-dependent, increased by insulin and glucose, and mediates vesicle fusion with plasma membrane in pancreatic cells and adipocytes. Interacts with STXBP3; the interaction is direct, occurs at the cell membrane and regulates glucose-stimulated insulin secretion. Interacts with cytoplasmic dynein light chain DYNLT1. Interacts with the SNARE (soluble N-ethylmaleimide-sensitive factor attached protein receptor) complex composed of SNAP25, STX1A and VAMP2; the interaction is calcium-dependent and competitive with SYT1. May interact with UNC13A; the interaction mediates targeting to the plasma membrane. Ca(2+) serves as cofactor. Expressed in brain; highly enriched in neurons.

The protein localises to the cytoplasm. The protein resides in the cytoplasmic granule. It is found in the cell membrane. Functionally, calcium sensor which positively regulates SNARE-dependent fusion of vesicles with membranes. Binds phospholipids in a calcium-dependent manner and may act at the priming stage of fusion by modifying membrane curvature to stimulate fusion. Involved in calcium-triggered exocytosis in chromaffin cells and calcium-dependent spontaneous release of neurotransmitter in absence of action potentials in neuronal cells. Involved both in glucose-stimulated insulin secretion in pancreatic cells and insulin-dependent GLUT4 transport to the plasma membrane in adipocytes. In Rattus norvegicus (Rat), this protein is Double C2-like domain-containing protein beta (Doc2b).